A 305-amino-acid polypeptide reads, in one-letter code: Acetaldehyde dehydrogenase (305 aa).

NAD(+) is bound at residue 13–16 (SGNI). C128 serves as the catalytic Acyl-thioester intermediate. Residues 159–167 (SAGPGTRQN) and N278 each bind NAD(+).

It belongs to the acetaldehyde dehydrogenase family.

The enzyme catalyses acetaldehyde + NAD(+) + CoA = acetyl-CoA + NADH + H(+). The protein is Acetaldehyde dehydrogenase of Chloroflexus aurantiacus (strain ATCC 29366 / DSM 635 / J-10-fl).